The primary structure comprises 424 residues: MSKTLQSIRGMHDVLPADTPAWQWLEAAARELLAGYGYEEIRMPIVEQTELFARSIGEVTDIVEKEMYTFEDRNGDSLTLRPEGTAGCVRAGIEHGLLHNQQQRLWYMGPMFRHERPQKGRYRQFHQIGVETFGMDGPDIDAELIILTARLWRVLGLKDVRLEINSLGSTEARAAYRALLVQHFEAHAEVLDEDARRRLHSNPLRILDSKNPAMREVIRSAPSLLDHLDEASRAHFEGLKALLTAAGIEFTVNPALVRGLDYYCRTVFEWITESLGAQGTVCAGGRYDGLVEQLGGRATPAAGFAMGLERLLALVEAGGARPPAPKPHAYLALAGEGTQAEGLRLAESLRDALPGLRLVVNGGGGGFKAQIKRADRSGADLALIIGESELAEGTILVKPLREAGGEQQAVPRDGLAEFLRARIG.

The protein belongs to the class-II aminoacyl-tRNA synthetase family. As to quaternary structure, homodimer.

The protein localises to the cytoplasm. It carries out the reaction tRNA(His) + L-histidine + ATP = L-histidyl-tRNA(His) + AMP + diphosphate + H(+). In Thioalkalivibrio sulfidiphilus (strain HL-EbGR7), this protein is Histidine--tRNA ligase.